The following is a 518-amino-acid chain: MAETSLLEAGASAASTAAALENLQVEASCSVCLEYLKEPVIIECGHNFCKACITRWWEDLERDFPCPVCRKTSRYRSLRPNRQLGSMVEIAKQLQAVKRKIRDESLCPQHHEALSLFCYEDQEAVCLICAISHTHRAHTVVPLDDATQEYKEKLQKCLEPLEQKLQEITRCKSSEEKKPGELKRLVESRRQQILREFEELHRRLDEEQQVLLSRLEEEEQDILQRLRENAAHLGDKRRDLAHLAAEVEGKCLQSGFEMLKDVKSTLEKNIPRKFGGSLSTICPRDHKALLGLVKEINRCEKVKTMEVTSVSIELEKNFSNFPRQYFALRKILKQLIADVTLDPETAHPNLVLSEDRKSVKFVETRLRDLPDTPRRFTFYPCVLATEGFTSGRHYWEVEVGDKTHWAVGVCRDSVSRKGELTPLPETGYWRVRLWNGDKYAATTTPFTPLHIKVKPKRVGIFLDYEAGTLSFYNVTDRSHIYTFTDTFTEKLWPLFYPGIRAGRKNAAPLTIRPPTDWE.

The RING-type zinc-finger motif lies at 29-70 (CSVCLEYLKEPVIIECGHNFCKACITRWWEDLERDFPCPVCR). Residues 102–143 (RDESLCPQHHEALSLFCYEDQEAVCLICAISHTHRAHTVVPL) form a B box-type zinc finger. The Zn(2+) site is built by Cys107, His110, Cys129, and His135. Positions 181–250 (ELKRLVESRR…AHLAAEVEGK (70 aa)) form a coiled coil. 2 interaction with CDKN1A regions span residues 268–337 (KNIP…QLIA) and 389–518 (TSGR…TDWE). Residues 319 to 514 (SNFPRQYFAL…NAAPLTIRPP (196 aa)) form the B30.2/SPRY domain.

This sequence belongs to the TRIM/RBCC family. Isoform 1 interacts with MOAP1. Isoform 1 and isoform 2 interact with CDKN1A. Isoform 2 interacts (via domain B box-type) with CACTIN. Post-translationally, autoubiquitinated. Ubiquitous; highly expressed in brain, heart, kidney, liver, skeletal muscle, spleen and testis.

It localises to the cytoplasm. The protein resides in the cytosol. Its subcellular location is the mitochondrion. The protein localises to the nucleus. It carries out the reaction S-ubiquitinyl-[E2 ubiquitin-conjugating enzyme]-L-cysteine + [acceptor protein]-L-lysine = [E2 ubiquitin-conjugating enzyme]-L-cysteine + N(6)-ubiquitinyl-[acceptor protein]-L-lysine.. The protein operates within protein modification; protein ubiquitination. Functionally, E3 ubiquitin-protein ligase. May facilitate apoptosis by inhibiting APC/C-Cdh1-mediated poly-ubiquitination and subsequent proteasome-mediated degradation of the pro-apoptotic protein MOAP1. Regulates the G1/S transition of the cell cycle and DNA damage-induced G2 arrest by stabilizing CDKN1A/p21. Positively regulates CDKN1A/p21 stability by competing with DTL for CDKN1A/p21 binding, therefore disrupting DCX(DTL) E3 ubiquitin ligase complex-mediated CDKN1A/p21 ubiquitination and degradation. Its function is as follows. Regulates the G1/S transition of the cell cycle and DNA damage-induced G2 arrest by stabilizing CDKN1A/p21. Positively regulates CDKN1A/p21 stability by competing with DTL for CDKN1A/p21 binding, therefore disrupting DCX(DTL) E3 ubiquitin ligase complex-mediated CDKN1A/p21 ubiquitination and degradation. Negatively regulates the canonical NF-kappa-B signaling pathway via stabilization of CACTIN in an ubiquitination-independent manner. This Homo sapiens (Human) protein is E3 ubiquitin-protein ligase TRIM39 (TRIM39).